Consider the following 206-residue polypeptide: Holliday junction branch migration complex subunit RuvA (206 aa).

The segment at 1–63 (MIASLRGTVI…EDAMKLYGFI (63 aa)) is domain I. A domain II region spans residues 64–142 (DNESREMFSV…AFAAGVVDEA (79 aa)). The interval 143 to 153 (GEQISLPNANI) is flexible linker. Residues 154 to 206 (ASEVVVEQVSQALVGLGFSEKQSDDAVSFVLAADPSLDTSGALRAALAKLSGK) form a domain III region.

It belongs to the RuvA family. Homotetramer. Forms an RuvA(8)-RuvB(12)-Holliday junction (HJ) complex. HJ DNA is sandwiched between 2 RuvA tetramers; dsDNA enters through RuvA and exits via RuvB. An RuvB hexamer assembles on each DNA strand where it exits the tetramer. Each RuvB hexamer is contacted by two RuvA subunits (via domain III) on 2 adjacent RuvB subunits; this complex drives branch migration. In the full resolvosome a probable DNA-RuvA(4)-RuvB(12)-RuvC(2) complex forms which resolves the HJ.

It is found in the cytoplasm. The RuvA-RuvB-RuvC complex processes Holliday junction (HJ) DNA during genetic recombination and DNA repair, while the RuvA-RuvB complex plays an important role in the rescue of blocked DNA replication forks via replication fork reversal (RFR). RuvA specifically binds to HJ cruciform DNA, conferring on it an open structure. The RuvB hexamer acts as an ATP-dependent pump, pulling dsDNA into and through the RuvAB complex. HJ branch migration allows RuvC to scan DNA until it finds its consensus sequence, where it cleaves and resolves the cruciform DNA. The chain is Holliday junction branch migration complex subunit RuvA from Corynebacterium glutamicum (strain R).